Here is a 289-residue protein sequence, read N- to C-terminus: MATYAVGDLQGCLEPLQCLLEQVAFDPARDRLWLVGDLVNRGPQSLETLRYLYSIRDSLVCVLGNHDLHLLAVWRNVERLKKSDTLREILEAPDCEELLQWLRQQKLMHYDEARNIAMVHAGIAPQWSLKKAQKCAAEVEEALRDDNLFDPFLDGMYGNDPAKWDSDLKGVTRLRVITNYFTRMRFCTSDGKLDLKSKEGLDTAPPGYAPWFSHKERKTRDLKIIFGHWAALEGHCNEPGIFALDSGCVWGGAMTLLNVDSGVRLTCDCDAQGRTAALSPDPLPAPAKR.

It belongs to the Ap4A hydrolase family.

It catalyses the reaction P(1),P(4)-bis(5'-adenosyl) tetraphosphate + H2O = 2 ADP + 2 H(+). Hydrolyzes diadenosine 5',5'''-P1,P4-tetraphosphate to yield ADP. The sequence is that of Bis(5'-nucleosyl)-tetraphosphatase, symmetrical from Pseudomonas fluorescens (strain ATCC BAA-477 / NRRL B-23932 / Pf-5).